The primary structure comprises 179 residues: Large ribosomal subunit protein uL5 (179 aa).

It belongs to the universal ribosomal protein uL5 family. As to quaternary structure, part of the 50S ribosomal subunit; part of the 5S rRNA/L5/L18/L25 subcomplex. Contacts the 5S rRNA and the P site tRNA. Forms a bridge to the 30S subunit in the 70S ribosome.

This is one of the proteins that bind and probably mediate the attachment of the 5S RNA into the large ribosomal subunit, where it forms part of the central protuberance. In the 70S ribosome it contacts protein S13 of the 30S subunit (bridge B1b), connecting the 2 subunits; this bridge is implicated in subunit movement. Contacts the P site tRNA; the 5S rRNA and some of its associated proteins might help stabilize positioning of ribosome-bound tRNAs. The sequence is that of Large ribosomal subunit protein uL5 from Desulfitobacterium hafniense (strain Y51).